The primary structure comprises 290 residues: Outer dense fiber protein 4 (290 aa).

Phosphoserine is present on S28. 4 helical membrane passes run 44–64 (AQVV…VMVF), 125–145 (PVFG…FVLT), 164–184 (LIGI…LLLF), and 201–221 (IGWS…CGIL). Residues 247–290 (GPESLVSPSQTPSSQENSQESPKDDQKPSSPDKVVSPPQPDTTG) are disordered. Residues 252 to 266 (VSPSQTPSSQENSQE) show a composition bias toward polar residues.

In terms of tissue distribution, expressed in testis.

Its subcellular location is the membrane. Its function is as follows. Component of the outer dense fibers (ODF) of spermatozoa which could be involved in sperm tail structure, sperm movement and general organization of cellular cytoskeleton. The polypeptide is Outer dense fiber protein 4 (Odf4) (Mus musculus (Mouse)).